The chain runs to 150 residues: UPF0178 protein Maqu_2186 (150 aa).

The protein belongs to the UPF0178 family.

This chain is UPF0178 protein Maqu_2186, found in Marinobacter nauticus (strain ATCC 700491 / DSM 11845 / VT8) (Marinobacter aquaeolei).